The primary structure comprises 376 residues: Ribonucleoside-diphosphate reductase subunit beta (376 aa).

D85, E116, and H119 together coordinate Fe cation. The active site involves Y123. Positions 205, 239, and 242 each coordinate Fe cation.

This sequence belongs to the ribonucleoside diphosphate reductase small chain family. Tetramer of two alpha and two beta subunits. The cofactor is Fe cation.

It carries out the reaction a 2'-deoxyribonucleoside 5'-diphosphate + [thioredoxin]-disulfide + H2O = a ribonucleoside 5'-diphosphate + [thioredoxin]-dithiol. Functionally, provides the precursors necessary for DNA synthesis. Catalyzes the biosynthesis of deoxyribonucleotides from the corresponding ribonucleotides. The sequence is that of Ribonucleoside-diphosphate reductase subunit beta (nrdB) from Buchnera aphidicola subsp. Acyrthosiphon pisum (strain APS) (Acyrthosiphon pisum symbiotic bacterium).